The following is a 118-amino-acid chain: Late cornified envelope protein 1E (118 aa).

Positions M1–C10 are enriched in low complexity. 2 disordered regions span residues M1–K23 and R84–C118. A compositionally biased stretch (pro residues) spans Q11–K23. Over residues S92–S103 the composition is skewed to low complexity. Gly residues predominate over residues S104–C118.

It belongs to the LCE family. As to quaternary structure, interacts with CYSRT1. In terms of tissue distribution, skin-specific. Expression was readily detected in adult trunk skin, adult arm skin, fetal skin, penal skin, vulva, esophagus and tongue. Not expressed in the cervix, rectum, lung, colon, or placenta.

Functionally, precursors of the cornified envelope of the stratum corneum. In Homo sapiens (Human), this protein is Late cornified envelope protein 1E (LCE1E).